Here is a 418-residue protein sequence, read N- to C-terminus: Serine hydroxymethyltransferase (418 aa).

Residues Leu-121 and 125–127 (GHL) contribute to the (6S)-5,6,7,8-tetrahydrofolate site. Lys-230 is modified (N6-(pyridoxal phosphate)lysine). Residues Glu-246 and 355 to 357 (SPF) each bind (6S)-5,6,7,8-tetrahydrofolate.

This sequence belongs to the SHMT family. In terms of assembly, homodimer. Pyridoxal 5'-phosphate serves as cofactor.

It localises to the cytoplasm. The catalysed reaction is (6R)-5,10-methylene-5,6,7,8-tetrahydrofolate + glycine + H2O = (6S)-5,6,7,8-tetrahydrofolate + L-serine. Its pathway is one-carbon metabolism; tetrahydrofolate interconversion. It functions in the pathway amino-acid biosynthesis; glycine biosynthesis; glycine from L-serine: step 1/1. Catalyzes the reversible interconversion of serine and glycine with tetrahydrofolate (THF) serving as the one-carbon carrier. This reaction serves as the major source of one-carbon groups required for the biosynthesis of purines, thymidylate, methionine, and other important biomolecules. Also exhibits THF-independent aldolase activity toward beta-hydroxyamino acids, producing glycine and aldehydes, via a retro-aldol mechanism. The protein is Serine hydroxymethyltransferase of Streptococcus pneumoniae serotype 19F (strain G54).